Here is a 273-residue protein sequence, read N- to C-terminus: Octanoyl-[GcvH]:protein N-octanoyltransferase (273 aa).

One can recognise a BPL/LPL catalytic domain in the interval 40–245 (ATEGAAIRSW…SLMELGATLT (206 aa)). C144 acts as the Acyl-thioester intermediate in catalysis.

Belongs to the octanoyltransferase LipL family.

The catalysed reaction is N(6)-octanoyl-L-lysyl-[glycine-cleavage complex H protein] + L-lysyl-[lipoyl-carrier protein] = N(6)-octanoyl-L-lysyl-[lipoyl-carrier protein] + L-lysyl-[glycine-cleavage complex H protein]. The protein operates within protein modification; protein lipoylation via endogenous pathway; protein N(6)-(lipoyl)lysine from octanoyl-[acyl-carrier-protein]. In terms of biological role, catalyzes the amidotransfer (transamidation) of the octanoyl moiety from octanoyl-GcvH to the lipoyl domain of the E2 subunit of lipoate-dependent enzymes. The chain is Octanoyl-[GcvH]:protein N-octanoyltransferase from Exiguobacterium sibiricum (strain DSM 17290 / CCUG 55495 / CIP 109462 / JCM 13490 / 255-15).